The primary structure comprises 221 residues: Ribosomal RNA small subunit methyltransferase G (221 aa).

S-adenosyl-L-methionine contacts are provided by residues G89, L94, 140–141 (VE), and R154.

This sequence belongs to the methyltransferase superfamily. RNA methyltransferase RsmG family.

The protein resides in the cytoplasm. It catalyses the reaction guanosine(527) in 16S rRNA + S-adenosyl-L-methionine = N(7)-methylguanosine(527) in 16S rRNA + S-adenosyl-L-homocysteine. Functionally, specifically methylates the N7 position of guanine in position 527 of 16S rRNA. This Methylibium petroleiphilum (strain ATCC BAA-1232 / LMG 22953 / PM1) protein is Ribosomal RNA small subunit methyltransferase G.